Here is a 334-residue protein sequence, read N- to C-terminus: MKQVVYIANSESKNIEVWNLCKSGKMNLIQKIETDGKIQPINIIQKRNLLYAGIFPDNKIITYSINHNGFLEKKNESNIPGKANYISFDKKKEFLFCSSYHSNFISVSPLNKFGIPQNPIQIIYNIEGCHAAKMNYKYNILFVISLKEDCIYLYYLTDFGILKSTEQNILHTQKKSGPRHIIFHPNQDFIYTINELNGTIDVWKIYKKNNVIKVKNIQNIHVLKNRFLKDYWCSDIHITSCGRFLYACDRFFNIISLFHINQNDNKLVFFKSYDTEEQPRSFNINSHNTHLIVAGEKSNTFIIYSISNSTGELKKINVYSTGQRPVWILIHALC.

The protein belongs to the cycloisomerase 2 family.

The enzyme catalyses 6-phospho-D-glucono-1,5-lactone + H2O = 6-phospho-D-gluconate + H(+). The protein operates within carbohydrate degradation; pentose phosphate pathway; D-ribulose 5-phosphate from D-glucose 6-phosphate (oxidative stage): step 2/3. Its function is as follows. Catalyzes the hydrolysis of 6-phosphogluconolactone to 6-phosphogluconate. This chain is 6-phosphogluconolactonase, found in Buchnera aphidicola subsp. Acyrthosiphon pisum (strain APS) (Acyrthosiphon pisum symbiotic bacterium).